The sequence spans 1158 residues: Phospholipid-transporting ATPase 1 (1158 aa).

The span at 1–15 (MDPRKSIDKPPHHDP) shows a compositional bias: basic and acidic residues. The interval 1–30 (MDPRKSIDKPPHHDPILGVSSRWSVSSKDN) is disordered. Topologically, residues 1–100 (MDPRKSIDKP…TAKYSVFTFL (100 aa)) are cytoplasmic. Residues 101 to 122 (PRNLFEQFHRVAYIYFLVIAVL) form a helical membrane-spanning segment. The Extracellular segment spans residues 123–127 (NQLPQ). The chain crosses the membrane as a helical span at residues 128 to 150 (LAVFGRGASIMPLAFVLLVSAIK). Residues 151–329 (DAYEDFRRHR…SRLETRMNLE (179 aa)) lie on the Cytoplasmic side of the membrane. A helical transmembrane segment spans residues 330-351 (IILLSLFLIVLCTIAAATAAVW). Topologically, residues 352 to 391 (LRTHRDDLDTILFYRRKDYSERPGGKNYKYYGWGWEIFFT) are extracellular. The helical transmembrane segment at 392-409 (FFMAVIVYQIMIPISLYI) threads the bilayer. Topologically, residues 410-914 (SMELVRIGQA…HGHWNYQRMG (505 aa)) are cytoplasmic. The active-site 4-aspartylphosphate intermediate is D457. Mg(2+)-binding residues include D859 and D863. Residues 915–934 (YMILYNFYRNAVFVLILFWY) form a helical membrane-spanning segment. The Extracellular portion of the chain corresponds to 935–948 (VLFTCYTLTTAITE). Residues 949–968 (WSSVLYSVIYTAIPTIIIGI) form a helical membrane-spanning segment. Residues 969 to 998 (LDKDLGRQTLLDHPQLYGVGQRAEGYSTTL) are Cytoplasmic-facing. A helical membrane pass occupies residues 999–1020 (FWYTMIDTIWQSAAIFFIPMFA). Residues 1021 to 1027 (YWGSTID) are Extracellular-facing. Residues 1028 to 1050 (TSSLGDLWTIAAVVVVNLHLAMD) traverse the membrane as a helical segment. Topologically, residues 1051-1056 (VIRWNW) are cytoplasmic. The helical transmembrane segment at 1057–1077 (ITHAAIWGSIVAACICVIVID) threads the bilayer. Topologically, residues 1078–1090 (VIPTLPGYWAIFQ) are extracellular. A helical membrane pass occupies residues 1091-1115 (VGKTWMFWFCLLAIVVTSLLPRFAI). Topologically, residues 1116–1158 (KFLVEYYRPSDVRIAREAEKLGTFRESQPVGVEMNLIQDPPRR) are cytoplasmic.

This sequence belongs to the cation transport ATPase (P-type) (TC 3.A.3) family. Type IV subfamily. Expressed in roots, flowers, anthers, leaves, vascular tissues and stems.

Its subcellular location is the endoplasmic reticulum membrane. It localises to the cell membrane. The catalysed reaction is ATP + H2O + phospholipidSide 1 = ADP + phosphate + phospholipidSide 2.. Involved in transport of phospholipids. Contributes to transmembrane flipping of lipids. Has activity with phosphatidylserine and with a much lower efficiency with phosphatidylethanolamine, but not with phosphatidylcholine. This Arabidopsis thaliana (Mouse-ear cress) protein is Phospholipid-transporting ATPase 1.